The primary structure comprises 458 residues: 3-isopropylmalate dehydratase large subunit (458 aa).

[4Fe-4S] cluster is bound by residues Cys-337, Cys-397, and Cys-400.

The protein belongs to the aconitase/IPM isomerase family. LeuC type 1 subfamily. Heterodimer of LeuC and LeuD. It depends on [4Fe-4S] cluster as a cofactor.

The enzyme catalyses (2R,3S)-3-isopropylmalate = (2S)-2-isopropylmalate. The protein operates within amino-acid biosynthesis; L-leucine biosynthesis; L-leucine from 3-methyl-2-oxobutanoate: step 2/4. Catalyzes the isomerization between 2-isopropylmalate and 3-isopropylmalate, via the formation of 2-isopropylmaleate. This chain is 3-isopropylmalate dehydratase large subunit, found in Leuconostoc mesenteroides subsp. mesenteroides (strain ATCC 8293 / DSM 20343 / BCRC 11652 / CCM 1803 / JCM 6124 / NCDO 523 / NBRC 100496 / NCIMB 8023 / NCTC 12954 / NRRL B-1118 / 37Y).